Consider the following 638-residue polypeptide: Chaperone protein DnaK (638 aa).

Threonine 198 carries the phosphothreonine; by autocatalysis modification. Low complexity predominate over residues 603-618 (QQAQAQQAQGADADAQ). A disordered region spans residues 603 to 638 (QQAQAQQAQGADADAQQSKEDDVVDAEFEEVKDDKK). A compositionally biased stretch (acidic residues) spans 624 to 638 (DVVDAEFEEVKDDKK).

The protein belongs to the heat shock protein 70 family.

Functionally, acts as a chaperone. The protein is Chaperone protein DnaK of Vibrio campbellii (strain ATCC BAA-1116).